Here is a 213-residue protein sequence, read N- to C-terminus: NDR1/HIN1-like protein 26 (213 aa).

At 1–27 (MSQISITSPKHCAKKGGININNRHKKL) the chain is on the cytoplasmic side. The helical transmembrane segment at 28–48 (FFTFSTFFSGLLLIIFLVWLI) threads the bilayer. Residues 49-213 (LHPERPEFSL…LQGTRCSTTI (165 aa)) are Lumenal-facing. N-linked (GlcNAc...) asparagine glycosylation is found at Asn-67, Asn-77, and Asn-195.

As to expression, expressed in the vasculature of roots, rosette leaves, stems, cauline leaves and flowers. Specifically expressed in phloem.

The protein resides in the cell junction. It localises to the plasmodesma. Its subcellular location is the endoplasmic reticulum membrane. Functionally, involved in the regulation of sugar, amino acid and some primary metabolite export from companion cells (CCs) to sieve elements (SEs) in phloem. Required for apoplastic phloem sugar loading in source leaves in order to transport it to sink tissues. Required for correct sugar partitioning between source leaves and sink organs. This chain is NDR1/HIN1-like protein 26, found in Arabidopsis thaliana (Mouse-ear cress).